We begin with the raw amino-acid sequence, 367 residues long: Glutamate 5-kinase (367 aa).

K10 is an ATP binding site. Positions 50, 137, and 149 each coordinate substrate. Residues 169-170 (TD) and 211-217 (TGGMSTK) each bind ATP. One can recognise a PUA domain in the interval 275–353 (AGEITVDEGA…QQIDAILGYE (79 aa)).

This sequence belongs to the glutamate 5-kinase family.

It is found in the cytoplasm. The enzyme catalyses L-glutamate + ATP = L-glutamyl 5-phosphate + ADP. It participates in amino-acid biosynthesis; L-proline biosynthesis; L-glutamate 5-semialdehyde from L-glutamate: step 1/2. Catalyzes the transfer of a phosphate group to glutamate to form L-glutamate 5-phosphate. This chain is Glutamate 5-kinase, found in Salmonella agona (strain SL483).